Consider the following 2531-residue polypeptide: Talin (2531 aa).

Residues 87–401 (RPLRVRMMDE…GYIDIILKKK (315 aa)) enclose the FERM domain. Residues 598 to 621 (GEKLLEAARGLAGAVRHLLKSAEP) are interaction with VIN1. An I/LWEQ domain is found at 2287 to 2526 (TDWVDPSDPN…KIRHDKYKRH (240 aa)). Positions 2466-2485 (AAKRSSEEGDDEEVSGGGQE) are disordered.

Interacts with VIN1 (vinculin); the interaction facilitates VIN1 binding to F-actin.

It localises to the cytoplasm. Its subcellular location is the cytoskeleton. The protein localises to the cell cortex. Its function is as follows. Probably involved in connections of major cytoskeletal structures to the plasma membrane. The chain is Talin from Oscarella pearsei (Sponge).